The chain runs to 205 residues: Ribosomal RNA small subunit methyltransferase G (205 aa).

Residues Gly66, Phe71, 119 to 120, and Arg135 contribute to the S-adenosyl-L-methionine site; that span reads IE.

The protein belongs to the methyltransferase superfamily. RNA methyltransferase RsmG family.

The protein localises to the cytoplasm. The enzyme catalyses guanosine(527) in 16S rRNA + S-adenosyl-L-methionine = N(7)-methylguanosine(527) in 16S rRNA + S-adenosyl-L-homocysteine. Functionally, specifically methylates the N7 position of guanine in position 527 of 16S rRNA. This chain is Ribosomal RNA small subunit methyltransferase G, found in Rhizobium johnstonii (strain DSM 114642 / LMG 32736 / 3841) (Rhizobium leguminosarum bv. viciae).